The primary structure comprises 2885 residues: MVSMQFVLQPLPGSDDQFIERIREVSDKVNRFGYGSHRIFEQLKIPVKEVVIGPAHIGVLLEDGKAFRVSFSINSEKLDLTKSDAKCSTSGGSGTASASKAPSSSRPMARSRARLLRATGRSNSTGQGSGSRSTGVIIGGSTSSRPLVTVPATYVPEELISQAEVVLQGKSRNLIIRELQRTNLDVNLAVNNLLSRDDEEAEDTEEGADNYVPEDLISLLDNGFSGDNNSVIIDPSDGLFSEEIFSNYSSIRNLLFDRIRSERSNANANAADSNQSTTRSTSSGTALTGNSGLSAQISVNADREAFSRWRDRQYYGPRRWISKDDYTWEKDADSKKKEPSPMLSPIWISEELQPWPEKSSVRFKTIGALYSEFIALSESGDLYQWRWSDAEPYKSETENVYHPKTVSLNIVERVELISANFIRCSVVTETNRVATWMDEQLGYIGAKLEHSCCAFNEFISDSITKIYVCSLYTVVKTESNNIYWWGVLPFDQRRFLWDKFRTKTKKPFKVVATDINVGAQVIMKKCPMYQSGSIGFTCSNGVPKVGQLLNSVWTFTDVCRMKIININTNSGVDKSQAAGNNLNAHGITPDKDLPKSTAMPSTGSSKNGQSFSNSKESTDRIDMPPPPSPASSTCSDTGSVTSHKRTKRATTKEDSNAPQEGRKDEELWEVKDVVFVEDKVGPVGKVLKVDGDFVAVRFPAINAAAVAAAAAATSSTSNTASTSKEEGKEDDWQQCRLLRREDVQIFRTAMSTRGPDWLQKQPKKINVGGDAAGAQILTLAVDSRGIHVIKKVLGKIHYSLYNLYNCKQEQNCLFPTDCNSFIGSTPGNILMACNDDCSGNSSTIVLRDGNGALYPLAKDCLGSIKDPQWFDLPPVKSITMSTISLPAMLSGVNLKSKVCMTALLFDTQKLMPHILRCDVKNSFAALGRLEREDQADTALVVEERCDGARNIFHACVIMCAPSSNKDSPPDSPSGGVEKKSLVGLSVARSIPTVSTSAYVSSIAFGASASSSNENSSFATMSSSAAGSASSTSRDNRTNLRDMMNRLINSDQAEQSGSQPMATNNEDHAYIPWPAETPAASNLSASSSQNVSDSIEDDISKIIPSSSQSSMLSNIKLGSPTYTFDLAQRREHALTILQQMCVSPALRPYLCHMLSTKDAQGQTPFMLSVSCRAYEAGIILLNTILMLSEQDPQLKEAMIFPNGSPADQSPLHVICYNDTCSFTWTGADHINQNIFECKTCGLTGSLCCCTECARVCHKGHDCKLKRTAPTAYCDCWEKCKCKALIAGNLTKRFALLCKLVSCTDLVTKFNSKGESILLFLIQTVGRQIVEQRQYRFSVRVRNVSTAATGATGNNSVISNRKTSAAEIDNDMPDHDLEPPKFARKALERLLIDWNAVRSMIMSGAERGDVPNPAGSASENSNSEGFNMFIQTQHGSTLLDKFTHSLIVKCTSDHLDTLLLTLVRELQNASVSNRSKEAEEVVRRFVRSVARVFVIFNLEKQPNPEKRKSHSSCNKYVQSCVKVFQTLHKISIEELCEVSEALIAPVRLGVVRPTAPFTMSSSNLDNSDDLFSVDPLAPSNVESPSEQILVHDAGNDQSANFNIQQNYDVVAMETIRDASESEEVINREANSHNQDDELIENQRNEDGMQDDESDNDFTFNDAETESDSDDNQSNQEVQRSVQAGATVGSENDIGVLFLEDESGDSSAQEEDGSEDGESDDQSDEFNFNEQQLERRSTNSNARSDLAPQTMQWAIRSRDTARSSVRVPTGSNMVFIDPMALRRSTVPASTTVTTPSIEPHTMATTASNLARAFGITIRQISELISILSYNVLNDIETSLKIQNDEAIAVQAFVEKRLKATWDWMFTVMDGTEAQLKFGAYLTNYTDPNHPLHPLNLSAQASSSQTPAPATSSSVNGVNIMGSNSRRDFFTYCLSLMRSHTSEHRDALPVLDITALRHIAYVLDAFVYYMRNDSGFYDKQDTISGRINNLSPMTESYDTDDELANLEEFNADVQMSASSMPSGSQGTRRHAFFARSESTLSLGCSAPEGFELPLDMAMPLADKPHLLQPNSKRQELFANLPLLVTTNANNSGATNDGDGGSIFDYTPTRLGFSNSLKRNERVYETVPIDSSKTGDGNVTNKAEGSTDSNIYVQLKKKQGSDDFKSHKEADGNQSKYEKVVLMETDDSLPSTSKSTEALMATRPEVIIAPNKASVSPATAARSVIVLAGGSCLKTIDSDINNYSASNLSTAEQAKCDTQYQKSTSDHLLLFPARGSQFYQSNFSELPSWNFLLSRWKLTLDLFGRVFMDDVGMEHGSVLPELRGFPVKEMRFRRHMEKLRNGQQRDLVLCKLERNRESLIVQTFKELNTQFGNQSRRIQPPITFNRVKVTFKDEPGEGSGVARSFYTSIAEALLASAKIPNLESVQVGTNHSKYVVPFSSILRSRTVSGSSRDQSTLQRRGSNSKILWRSARERKALNLDARPYTPPNSSDNATPESLNDHLSVHLQQIGERLYPKIHSINQTHAPKITGMLLEIPTPQLLSVISSDETLRQKVNEAIEIITFKQKSETSAQSSQPKKSPSVVVVDPVDDDNEPLFYSPGKRGFYTPRQGFASFERINAFRNIGRLIGLCLLQNELLPLFLQRHVLKYILGRKIKFHDLAFFDPALYESFRQIIQNAQTKEGEETINRMELCFVIDLMKEEGCGNRELIPGGRDVAVTSSNIFEYVRRYTEYRLIKSQEKALEALKDGVFDVLPDNSMINLTAEDLRLLLNGVGDINVSTLISYTTFNDESSEGPDKLLKFKKWFWSIVEKMNIMERQDLVYFWTGSPALPASEEGFQPLPSVTIRPADDSHLPTANTCISRLYIPLYSSKSILRSKMLMAIKSKNFGFV.

The segment at Ser83–Ile138 is disordered. 2 stretches are compositionally biased toward low complexity: residues Thr95–Met108 and Leu116–Ile138. In terms of domain architecture, UBA spans Tyr154–Arg196. The span at Ala266–Ser276 shows a compositional bias: low complexity. Disordered stretches follow at residues Ala266 to Ser291, Asn580 to Asp664, and Ala711 to Asp731. Polar residues-rich tracts occupy residues Thr277–Ser291 and Ala598–Lys615. Residues Ser628 and Ser631 each carry the phosphoserine modification. Over residues Thr650–Asp664 the composition is skewed to basic and acidic residues. Low complexity predominate over residues Ala711–Thr722. A Phosphoserine modification is found at Ser967. Residues Ala1008–Ser1032 show a composition bias toward low complexity. The interval Ala1008–Asn1035 is disordered. Residues Asp1217–Ala1285 form a UBR-type zinc finger. Phosphoserine is present on Ser1362. The interval Asn1642–Ser1761 is disordered. Over residues Asn1669–Ala1681 the composition is skewed to polar residues. Residues Leu1696–Asp1721 are compositionally biased toward acidic residues. Over residues Thr1735–Gln1749 the composition is skewed to polar residues. Ser2037 is modified (phosphoserine). The disordered stretch occupies residues Ile2124–Asp2143. Ser2183 is subject to Phosphoserine. The disordered stretch occupies residues Asn2473 to Ser2492. Residues Pro2482–Ser2492 show a composition bias toward polar residues. In terms of domain architecture, PABC spans Ser2484 to Lys2561. Ser2574 carries the post-translational modification Phosphoserine. Positions Phe2782–Val2885 constitute an HECT domain. The active-site Glycyl thioester intermediate is Cys2854.

The protein belongs to the UBR5 family.

It localises to the nucleus. It is found in the cytoplasm. It carries out the reaction S-ubiquitinyl-[E2 ubiquitin-conjugating enzyme]-L-cysteine + [acceptor protein]-L-lysine = [E2 ubiquitin-conjugating enzyme]-L-cysteine + N(6)-ubiquitinyl-[acceptor protein]-L-lysine.. The protein operates within protein modification; protein ubiquitination. E3 ubiquitin-protein ligase which accepts ubiquitin from an E2 ubiquitin-conjugating enzyme in the form of a thioester and then directly transfers the ubiquitin to targeted substrate. Required for regulation of cell proliferation in imaginal disks and germ cells. Acts as a negative regulator of hh, ci and dpp expression in the anterior of the eye disk. Acts as a positive regulator of the canonical Wnt signaling pathway by mediating ubiquitination and degradation of gro. Catalyzes 'Lys-63'-linked polyubiquitination of akirin, thereby activating the immune deficiency pathway (Imd). The sequence is that of E3 ubiquitin-protein ligase hyd (hyd) from Drosophila melanogaster (Fruit fly).